The sequence spans 121 residues: Natriuretic peptides B (121 aa).

Residues 1–26 (MDLLKVLSQMILFLLFLYLSPLGGHS) form the signal peptide. The disordered stretch occupies residues 61 to 89 (LKDQGLTKEHPKRVLRSQGSTLRVQQRPQ). Polar residues predominate over residues 77-89 (SQGSTLRVQQRPQ). A disulfide bridge connects residues C99 and C115.

It belongs to the natriuretic peptide family. Post-translationally, the precursor molecule is proteolytically cleaved by the endoprotease Furin to produce brain natriuretic peptide 45. May undergo further proteolytic cleavage by various proteases such as DPP4, MME and possibly FAP, to give rise to a variety of shorter peptides. May be cleaved at Ser-91 by the prolyl endopeptidase FAP (seprase) activity (in vitro). May be degraded by IDE. During IDE degradation, the resulting products initially increase the activation of NPR1 and can also stimulate NPR2 to produce cGMP before the fragments are completely degraded and inactivated by IDE (in vitro). Expressed abundantly in the ventricle, and in a lesser extent in the atrium (at protein level).

It is found in the secreted. Its function is as follows. Cardiac hormone that plays a key role in mediating cardio-renal homeostasis. May also function as a paracrine antifibrotic factor in the heart. Acts by specifically binding and stimulating NPR1 to produce cGMP, which in turn activates effector proteins that drive various biological responses. Likely involved in regulating the extracellular fluid volume and maintaining the fluid-electrolyte balance through natriuresis, diuresis, kaluresis and chloruresis. The protein is Natriuretic peptides B (Nppb) of Mus musculus (Mouse).